A 140-amino-acid polypeptide reads, in one-letter code: Large ribosomal subunit protein uL22 (140 aa).

The segment at 115-140 is disordered; that stretch reads AKPAAAKKDPKAAAAKADANAGTKEG.

The protein belongs to the universal ribosomal protein uL22 family. Part of the 50S ribosomal subunit.

Its function is as follows. This protein binds specifically to 23S rRNA; its binding is stimulated by other ribosomal proteins, e.g. L4, L17, and L20. It is important during the early stages of 50S assembly. It makes multiple contacts with different domains of the 23S rRNA in the assembled 50S subunit and ribosome. The globular domain of the protein is located near the polypeptide exit tunnel on the outside of the subunit, while an extended beta-hairpin is found that lines the wall of the exit tunnel in the center of the 70S ribosome. This is Large ribosomal subunit protein uL22 from Heliobacterium modesticaldum (strain ATCC 51547 / Ice1).